We begin with the raw amino-acid sequence, 227 residues long: Albumin-2 (227 aa).

4 Hemopexin repeats span residues 3–46 (PGYI…GPTP), 61–111 (SYGI…FPFF), 117–165 (ESGI…YPCF), and 171–221 (ESGA…WPSL). Positions 7 and 65 each coordinate Ca(2+). Position 118 (Ser118) interacts with spermine. The Ca(2+) site is built by Asp121 and Asp175.

Monomer and homodimer. Dimers are prevalent in solution.

The protein resides in the cytoplasm. It is found in the cytosol. Functionally, may play a role in response to oxidative stress and polyamine biosynthesis. The monomeric form binds one hemin per monomer. In the dimeric form, about half of the dimers bind one molecule of spermine each under physiological conditions. Ligand binding is mutually exclusive as binding of hemin leads to dissociation of the dimer. The sequence is that of Albumin-2 from Lathyrus sativus (White vetchling).